A 59-amino-acid polypeptide reads, in one-letter code: uncharacterized protein (59 aa).

The signal sequence occupies residues 1 to 21 (MYLFYVLLSSLFLSALIYVIG). Residues 22–24 (KSH) lie on the Extracellular side of the membrane. A helical transmembrane segment spans residues 25-45 (PNLFMFISLFVNVVTILYLVF). Residues 46-59 (KDYGQYIIAKPINT) lie on the Cytoplasmic side of the membrane.

The protein resides in the host membrane. This is an uncharacterized protein from Acidianus convivator (ABV).